We begin with the raw amino-acid sequence, 528 residues long: Glucose-6-phosphate isomerase (528 aa).

E322 acts as the Proton donor in catalysis. Catalysis depends on residues H351 and K455.

The protein belongs to the GPI family.

The protein resides in the cytoplasm. It catalyses the reaction alpha-D-glucose 6-phosphate = beta-D-fructose 6-phosphate. It functions in the pathway carbohydrate biosynthesis; gluconeogenesis. The protein operates within carbohydrate degradation; glycolysis; D-glyceraldehyde 3-phosphate and glycerone phosphate from D-glucose: step 2/4. Functionally, catalyzes the reversible isomerization of glucose-6-phosphate to fructose-6-phosphate. This Trichormus variabilis (strain ATCC 29413 / PCC 7937) (Anabaena variabilis) protein is Glucose-6-phosphate isomerase.